A 311-amino-acid polypeptide reads, in one-letter code: Probable manganese-dependent inorganic pyrophosphatase (311 aa).

Mn(2+) is bound by residues His9, Asp13, Asp15, Asp75, His97, and Asp149.

The protein belongs to the PPase class C family. Requires Mn(2+) as cofactor.

The protein localises to the cytoplasm. The catalysed reaction is diphosphate + H2O = 2 phosphate + H(+). In Shouchella clausii (strain KSM-K16) (Alkalihalobacillus clausii), this protein is Probable manganese-dependent inorganic pyrophosphatase.